We begin with the raw amino-acid sequence, 211 residues long: Probable nicotinate-nucleotide adenylyltransferase (211 aa).

It belongs to the NadD family.

The catalysed reaction is nicotinate beta-D-ribonucleotide + ATP + H(+) = deamido-NAD(+) + diphosphate. It functions in the pathway cofactor biosynthesis; NAD(+) biosynthesis; deamido-NAD(+) from nicotinate D-ribonucleotide: step 1/1. Its function is as follows. Catalyzes the reversible adenylation of nicotinate mononucleotide (NaMN) to nicotinic acid adenine dinucleotide (NaAD). This Gemmatimonas aurantiaca (strain DSM 14586 / JCM 11422 / NBRC 100505 / T-27) protein is Probable nicotinate-nucleotide adenylyltransferase.